The primary structure comprises 251 residues: CDP-diacylglycerol pyrophosphatase (251 aa).

A helical transmembrane segment spans residues 5–25 (GYFLLAVIVIVAAAGVGYWKF).

It belongs to the Cdh family.

The protein localises to the cell inner membrane. It catalyses the reaction a CDP-1,2-diacyl-sn-glycerol + H2O = a 1,2-diacyl-sn-glycero-3-phosphate + CMP + 2 H(+). It participates in phospholipid metabolism; CDP-diacylglycerol degradation; phosphatidate from CDP-diacylglycerol: step 1/1. This is CDP-diacylglycerol pyrophosphatase from Salmonella enteritidis PT4 (strain P125109).